The chain runs to 476 residues: Glycogen synthase (476 aa).

Lys15 is an ADP-alpha-D-glucose binding site.

The protein belongs to the glycosyltransferase 1 family. Bacterial/plant glycogen synthase subfamily.

The catalysed reaction is [(1-&gt;4)-alpha-D-glucosyl](n) + ADP-alpha-D-glucose = [(1-&gt;4)-alpha-D-glucosyl](n+1) + ADP + H(+). The protein operates within glycan biosynthesis; glycogen biosynthesis. In terms of biological role, synthesizes alpha-1,4-glucan chains using ADP-glucose. In Yersinia pseudotuberculosis serotype IB (strain PB1/+), this protein is Glycogen synthase.